The primary structure comprises 121 residues: Succinate dehydrogenase assembly factor 3, mitochondrial (121 aa).

Residues 1 to 35 (MRPSLVRLVRPRRPERKTSPILPPLKLYKALLRAH) constitute a mitochondrion transit peptide.

It belongs to the complex I LYR family. SDHAF3 subfamily. In terms of assembly, interacts with the iron-sulfur protein subunit within the SDH catalytic dimer.

Its subcellular location is the mitochondrion matrix. Functionally, plays an essential role in the assembly of succinate dehydrogenase (SDH), an enzyme complex (also referred to as respiratory complex II) that is a component of both the tricarboxylic acid (TCA) cycle and the mitochondrial electron transport chain, and which couples the oxidation of succinate to fumarate with the reduction of ubiquinone (coenzyme Q) to ubiquinol. Promotes maturation of the iron-sulfur protein subunit of the SDH catalytic dimer, protecting it from the deleterious effects of oxidants. May act together with SDHAF1. The protein is Succinate dehydrogenase assembly factor 3, mitochondrial of Debaryomyces hansenii (strain ATCC 36239 / CBS 767 / BCRC 21394 / JCM 1990 / NBRC 0083 / IGC 2968) (Yeast).